The following is a 229-amino-acid chain: Flagellar L-ring protein (229 aa).

An N-terminal signal peptide occupies residues 1-25 (MKQVRLPSSATVRAACAVAVAALAG). Cys-26 carries N-palmitoyl cysteine lipidation. Cys-26 carries S-diacylglycerol cysteine lipidation.

This sequence belongs to the FlgH family. The basal body constitutes a major portion of the flagellar organelle and consists of four rings (L,P,S, and M) mounted on a central rod.

The protein resides in the cell outer membrane. The protein localises to the bacterial flagellum basal body. Functionally, assembles around the rod to form the L-ring and probably protects the motor/basal body from shearing forces during rotation. This chain is Flagellar L-ring protein, found in Burkholderia orbicola (strain AU 1054).